The sequence spans 513 residues: 2,3-bisphosphoglycerate-independent phosphoglycerate mutase (513 aa).

Positions 15 and 65 each coordinate Mn(2+). The active-site Phosphoserine intermediate is S65. Substrate-binding positions include H126, 156 to 157 (RD), R188, R194, 263 to 266 (RADR), and K337. Residues D402, H406, D443, H444, and H461 each coordinate Mn(2+).

The protein belongs to the BPG-independent phosphoglycerate mutase family. Monomer. It depends on Mn(2+) as a cofactor.

It catalyses the reaction (2R)-2-phosphoglycerate = (2R)-3-phosphoglycerate. It participates in carbohydrate degradation; glycolysis; pyruvate from D-glyceraldehyde 3-phosphate: step 3/5. Catalyzes the interconversion of 2-phosphoglycerate and 3-phosphoglycerate. This Moorella thermoacetica (strain ATCC 39073 / JCM 9320) protein is 2,3-bisphosphoglycerate-independent phosphoglycerate mutase.